The sequence spans 224 residues: DNA mismatch repair protein MutH (224 aa).

The protein belongs to the MutH family.

The protein resides in the cytoplasm. Sequence-specific endonuclease that cleaves unmethylated GATC sequences. It is involved in DNA mismatch repair. The chain is DNA mismatch repair protein MutH from Histophilus somni (strain 2336) (Haemophilus somnus).